Consider the following 251-residue polypeptide: 5-oxoprolinase subunit A (251 aa).

This sequence belongs to the LamB/PxpA family. In terms of assembly, forms a complex composed of PxpA, PxpB and PxpC.

The enzyme catalyses 5-oxo-L-proline + ATP + 2 H2O = L-glutamate + ADP + phosphate + H(+). Catalyzes the cleavage of 5-oxoproline to form L-glutamate coupled to the hydrolysis of ATP to ADP and inorganic phosphate. This is 5-oxoprolinase subunit A from Tolumonas auensis (strain DSM 9187 / NBRC 110442 / TA 4).